The primary structure comprises 83 residues: ATP synthase subunit c (83 aa).

A run of 2 helical transmembrane segments spans residues Ile10–Leu30 and Met52–Phe72.

It belongs to the ATPase C chain family. F-type ATPases have 2 components, F(1) - the catalytic core - and F(0) - the membrane proton channel. F(1) has five subunits: alpha(3), beta(3), gamma(1), delta(1), epsilon(1). F(0) has three main subunits: a(1), b(2) and c(10-14). The alpha and beta chains form an alternating ring which encloses part of the gamma chain. F(1) is attached to F(0) by a central stalk formed by the gamma and epsilon chains, while a peripheral stalk is formed by the delta and b chains.

Its subcellular location is the cell inner membrane. Its function is as follows. F(1)F(0) ATP synthase produces ATP from ADP in the presence of a proton or sodium gradient. F-type ATPases consist of two structural domains, F(1) containing the extramembraneous catalytic core and F(0) containing the membrane proton channel, linked together by a central stalk and a peripheral stalk. During catalysis, ATP synthesis in the catalytic domain of F(1) is coupled via a rotary mechanism of the central stalk subunits to proton translocation. Functionally, key component of the F(0) channel; it plays a direct role in translocation across the membrane. A homomeric c-ring of between 10-14 subunits forms the central stalk rotor element with the F(1) delta and epsilon subunits. This chain is ATP synthase subunit c, found in Shewanella baltica (strain OS223).